A 358-amino-acid chain; its full sequence is MDLMSFKEREISKKDCVELFEDTENFFDILKLADSIRKDIVGDTVTFVKNTNIETTNVCTMGCKFCAFSVSKNSPEAFKLDADEIAKKAVIAKKSGLTEVTIHGGIHPDVDTHFQVETINKVNSATSKLGGIYTHAYSPQEILNGAENAGLSIKEALKMLNEAGLRTIPGTAAEILDDEVRSDICPLKMSTKKWIDIMKTAHKTGIKTTSTIIYGHVEEYKHIVDHLSILKELQEETGGITEFIPMSFLHENTPLYKSGRVTDGASGLYELKLYAIARILFKESIKNIQAPRVKIGTKLSQLILKSGANDLGGTLVEDKVSKAAGSIYEDASVDLMKNAITSIGRIPKERTTLYEIIE.

Positions 45-292 (VTFVKNTNIE…ESIKNIQAPR (248 aa)) constitute a Radical SAM core domain. Residues C59, C63, and C66 each contribute to the [4Fe-4S] cluster site.

This sequence belongs to the radical SAM superfamily. CofH family. Consists of two subunits, CofG and CofH. [4Fe-4S] cluster serves as cofactor.

The catalysed reaction is 5-amino-6-(D-ribitylamino)uracil + L-tyrosine + S-adenosyl-L-methionine = 5-amino-5-(4-hydroxybenzyl)-6-(D-ribitylimino)-5,6-dihydrouracil + 2-iminoacetate + 5'-deoxyadenosine + L-methionine + H(+). The protein operates within cofactor biosynthesis; coenzyme F0 biosynthesis. In terms of biological role, catalyzes the radical-mediated synthesis of 5-amino-5-(4-hydroxybenzyl)-6-(D-ribitylimino)-5,6-dihydrouracil from 5-amino-6-(D-ribitylamino)uracil and L-tyrosine. The protein is 5-amino-6-(D-ribitylamino)uracil--L-tyrosine 4-hydroxyphenyl transferase 2 of Methanococcus maripaludis (strain DSM 14266 / JCM 13030 / NBRC 101832 / S2 / LL).